The primary structure comprises 265 residues: Indole-3-glycerol phosphate synthase (265 aa).

Belongs to the TrpC family.

The catalysed reaction is 1-(2-carboxyphenylamino)-1-deoxy-D-ribulose 5-phosphate + H(+) = (1S,2R)-1-C-(indol-3-yl)glycerol 3-phosphate + CO2 + H2O. The protein operates within amino-acid biosynthesis; L-tryptophan biosynthesis; L-tryptophan from chorismate: step 4/5. This Xanthomonas axonopodis pv. citri (strain 306) protein is Indole-3-glycerol phosphate synthase.